The sequence spans 96 residues: Dynein light chain roadblock-type 1 (96 aa).

N-acetylalanine is present on Ala2.

The protein belongs to the GAMAD family. As to quaternary structure, homodimer. The cytoplasmic dynein 1 complex consists of two catalytic heavy chains (HCs) and a number of non-catalytic subunits presented by intermediate chains (ICs), light intermediate chains (LICs) and light chains (LCs); the composition seems to vary in respect to the IC, LIC and LC composition. The heavy chain homodimer serves as a scaffold for the probable homodimeric assembly of the respective non-catalytic subunits. The ICs and LICs bind directly to the HC dimer and the LCs assemble on the IC dimer. Interacts with DYNLRB2. Interacts with DYNC1I1 and DYNC1I2. Interacts with RAB6A isoform 1 (GTP-bound); the interaction is direct. Interacts with RAB6A isoform 2 (GDP-bound); the interaction is direct. Interacts with RAB6B (GDP-bound). High expression in heart, liver, brain and pancreas; moderate in placenta, skeletal muscle and kidney; low in lung, prostate, testis, small intestine and colon. Isoform 1 expression is up-regulated in 64% hepatocellular carcinoma (HCC) patients.

It is found in the cytoplasm. The protein localises to the cytoskeleton. Acts as one of several non-catalytic accessory components of the cytoplasmic dynein 1 complex that are thought to be involved in linking dynein to cargos and to adapter proteins that regulate dynein function. Cytoplasmic dynein 1 acts as a motor for the intracellular retrograde motility of vesicles and organelles along microtubules. In Homo sapiens (Human), this protein is Dynein light chain roadblock-type 1.